The primary structure comprises 298 residues: Mitochondrial basic amino acids transporter (298 aa).

The next 6 membrane-spanning stretches (helical) occupy residues 2–22, 61–81, 96–116, 153–172, 187–207, and 255–275; these read ALDF…GHPF, GLGS…GVQG, FLAG…MELA, GMVS…FLTY, LLVP…WLST, and LLRA…VLSY. Solcar repeat units follow at residues 2 to 86, 90 to 178, and 185 to 275; these read ALDF…TLRA, DSPL…LTRA, and DRLL…VLSY.

This sequence belongs to the mitochondrial carrier (TC 2.A.29) family.

Its subcellular location is the mitochondrion inner membrane. The enzyme catalyses L-lysine(out) + L-arginine(in) = L-lysine(in) + L-arginine(out). It carries out the reaction L-histidine(out) + L-arginine(in) = L-histidine(in) + L-arginine(out). The catalysed reaction is L-ornithine(in) + L-arginine(out) = L-ornithine(out) + L-arginine(in). It catalyses the reaction L-homoarginine(in) + L-arginine(out) = L-homoarginine(out) + L-arginine(in). The enzyme catalyses N(omega)-methyl-L-arginine(in) + L-arginine(out) = N(omega)-methyl-L-arginine(out) + L-arginine(in). It carries out the reaction L-arginine(in) = L-arginine(out). The catalysed reaction is L-lysine(in) = L-lysine(out). It catalyses the reaction L-ornithine(in) = L-ornithine(out). The enzyme catalyses L-histidine(out) = L-histidine(in). Mitochondrial transporter of arginine, lysine, homoarginine, methylarginine and, to a much lesser extent, ornithine and histidine. Does not transport carnitine nor acylcarnitines. Functions by both counter-exchange and uniport mechanisms. Plays a physiological role in the import of basic amino acids into mitochondria for mitochondrial protein synthesis and amino acid degradation. In Bos taurus (Bovine), this protein is Mitochondrial basic amino acids transporter (SLC25A29).